The following is a 98-amino-acid chain: Large ribosomal subunit protein uL23 (98 aa).

It belongs to the universal ribosomal protein uL23 family. Part of the 50S ribosomal subunit. Contacts protein L29, and trigger factor when it is bound to the ribosome.

Functionally, one of the early assembly proteins it binds 23S rRNA. One of the proteins that surrounds the polypeptide exit tunnel on the outside of the ribosome. Forms the main docking site for trigger factor binding to the ribosome. In Rickettsia bellii (strain OSU 85-389), this protein is Large ribosomal subunit protein uL23.